The sequence spans 314 residues: MTDMLTTPRPEAQGQFLVAALYHFVAFPRFAEFRGPLQAVCDANGVKGTLLLAHEGINGTIAGTEAGIATVLAYLTAQPEFTGLEHKESRAAAMPFLRMKVRLKKEIVTMGVETIDPNQVVGTYVEPKDWNALIADPETLVIDTRNDYETAIGLFRGAVDPQTKTFREFPDWVRNHTGLHNKPKIAMYCTGGIRCEKATAFMKEQGFEEVYHLKGGILKYLEQIPAEESLWDGACFVFDERVSVTHGLAEGEHTLCHACRQPLTPEDVLSPHHEEGVSCVHCHAVRTEEDRERYRERQRQIALAKKRGERHLGS.

The region spanning 135–229 (ADPETLVIDT…YLEQIPAEES (95 aa)) is the Rhodanese domain. The Cysteine persulfide intermediate role is filled by Cys189.

It belongs to the TrhO family.

It catalyses the reaction uridine(34) in tRNA + AH2 + O2 = 5-hydroxyuridine(34) in tRNA + A + H2O. Functionally, catalyzes oxygen-dependent 5-hydroxyuridine (ho5U) modification at position 34 in tRNAs. This Sinorhizobium fredii (strain NBRC 101917 / NGR234) protein is tRNA uridine(34) hydroxylase.